A 189-amino-acid polypeptide reads, in one-letter code: Elongation factor P-like protein (189 aa).

The protein belongs to the elongation factor P family.

The chain is Elongation factor P-like protein from Vibrio atlanticus (strain LGP32) (Vibrio splendidus (strain Mel32)).